A 256-amino-acid chain; its full sequence is MNDQRKGDHAEPTTHFGYQDVPESQKAKKVAEVFHSVAAKYDLMNDVLSGGMHRLWKRFTIELSGVRAGNRVLDIAGGTGDLAAKFSRLVGPTGQVVLADINESMLKVGRDRLLDRGVAGNIEFVQADAEKLPFPDNHFDCVTIAFGLRNVTHKDEAIRSMLRVLKPGGRLLVLEFSKPTNKLMSKAYDAYSFAFMPLAGKLITNDSESYRYLAESIRMHPDQETLKAMMVEAGFDRVTYHNMTSGIVAVHRGIKP.

Positions 1 to 12 (MNDQRKGDHAEP) are enriched in basic and acidic residues. A disordered region spans residues 1–22 (MNDQRKGDHAEPTTHFGYQDVP). S-adenosyl-L-methionine-binding positions include Thr-79, Asp-100, and 128-129 (DA).

This sequence belongs to the class I-like SAM-binding methyltransferase superfamily. MenG/UbiE family.

The catalysed reaction is a 2-demethylmenaquinol + S-adenosyl-L-methionine = a menaquinol + S-adenosyl-L-homocysteine + H(+). The enzyme catalyses a 2-methoxy-6-(all-trans-polyprenyl)benzene-1,4-diol + S-adenosyl-L-methionine = a 5-methoxy-2-methyl-3-(all-trans-polyprenyl)benzene-1,4-diol + S-adenosyl-L-homocysteine + H(+). It functions in the pathway quinol/quinone metabolism; menaquinone biosynthesis; menaquinol from 1,4-dihydroxy-2-naphthoate: step 2/2. Its pathway is cofactor biosynthesis; ubiquinone biosynthesis. In terms of biological role, methyltransferase required for the conversion of demethylmenaquinol (DMKH2) to menaquinol (MKH2) and the conversion of 2-polyprenyl-6-methoxy-1,4-benzoquinol (DDMQH2) to 2-polyprenyl-3-methyl-6-methoxy-1,4-benzoquinol (DMQH2). This chain is Ubiquinone/menaquinone biosynthesis C-methyltransferase UbiE, found in Pseudomonas putida (Arthrobacter siderocapsulatus).